A 247-amino-acid polypeptide reads, in one-letter code: Small ribosomal subunit protein uS2 (247 aa).

Belongs to the universal ribosomal protein uS2 family.

This chain is Small ribosomal subunit protein uS2, found in Cupriavidus metallidurans (strain ATCC 43123 / DSM 2839 / NBRC 102507 / CH34) (Ralstonia metallidurans).